A 317-amino-acid polypeptide reads, in one-letter code: Aspartate carbamoyltransferase catalytic subunit (317 aa).

Arginine 65 and threonine 66 together coordinate carbamoyl phosphate. Lysine 93 lines the L-aspartate pocket. Carbamoyl phosphate contacts are provided by arginine 115, histidine 145, and glutamine 148. Residues arginine 178 and arginine 233 each coordinate L-aspartate. Carbamoyl phosphate contacts are provided by glycine 274 and proline 275.

It belongs to the aspartate/ornithine carbamoyltransferase superfamily. ATCase family. In terms of assembly, heterododecamer (2C3:3R2) of six catalytic PyrB chains organized as two trimers (C3), and six regulatory PyrI chains organized as three dimers (R2).

The catalysed reaction is carbamoyl phosphate + L-aspartate = N-carbamoyl-L-aspartate + phosphate + H(+). Its pathway is pyrimidine metabolism; UMP biosynthesis via de novo pathway; (S)-dihydroorotate from bicarbonate: step 2/3. Functionally, catalyzes the condensation of carbamoyl phosphate and aspartate to form carbamoyl aspartate and inorganic phosphate, the committed step in the de novo pyrimidine nucleotide biosynthesis pathway. The protein is Aspartate carbamoyltransferase catalytic subunit of Bordetella parapertussis (strain 12822 / ATCC BAA-587 / NCTC 13253).